Here is a 51-residue protein sequence, read N- to C-terminus: Large ribosomal subunit protein eL39z (51 aa).

This sequence belongs to the eukaryotic ribosomal protein eL39 family.

The sequence is that of Large ribosomal subunit protein eL39z (RPL39A) from Oryza sativa subsp. japonica (Rice).